The sequence spans 670 residues: DNA ligase (670 aa).

NAD(+) is bound by residues 34 to 38 (DAEYD), 83 to 84 (SL), and glutamate 117. The active-site N6-AMP-lysine intermediate is the lysine 119. Residues arginine 140, glutamate 177, lysine 293, and lysine 317 each contribute to the NAD(+) site. Zn(2+) is bound by residues cysteine 411, cysteine 414, cysteine 429, and cysteine 434. A BRCT domain is found at 591-670 (KVGGRFTGKT…DEFLAMLEEG (80 aa)).

This sequence belongs to the NAD-dependent DNA ligase family. LigA subfamily. Requires Mg(2+) as cofactor. It depends on Mn(2+) as a cofactor.

It carries out the reaction NAD(+) + (deoxyribonucleotide)n-3'-hydroxyl + 5'-phospho-(deoxyribonucleotide)m = (deoxyribonucleotide)n+m + AMP + beta-nicotinamide D-nucleotide.. Functionally, DNA ligase that catalyzes the formation of phosphodiester linkages between 5'-phosphoryl and 3'-hydroxyl groups in double-stranded DNA using NAD as a coenzyme and as the energy source for the reaction. It is essential for DNA replication and repair of damaged DNA. In Geobacter sulfurreducens (strain ATCC 51573 / DSM 12127 / PCA), this protein is DNA ligase.